Here is a 238-residue protein sequence, read N- to C-terminus: Purine nucleoside phosphorylase DeoD-type (238 aa).

A purine D-ribonucleoside is bound at residue H4. Residues G20, R24, R43, and 87–90 (RVGS) each bind phosphate. A purine D-ribonucleoside-binding positions include 179–181 (EME) and 203–204 (SD). The Proton donor role is filled by D204.

This sequence belongs to the PNP/UDP phosphorylase family. As to quaternary structure, homohexamer; trimer of homodimers.

The enzyme catalyses a purine D-ribonucleoside + phosphate = a purine nucleobase + alpha-D-ribose 1-phosphate. The catalysed reaction is a purine 2'-deoxy-D-ribonucleoside + phosphate = a purine nucleobase + 2-deoxy-alpha-D-ribose 1-phosphate. Functionally, catalyzes the reversible phosphorolytic breakdown of the N-glycosidic bond in the beta-(deoxy)ribonucleoside molecules, with the formation of the corresponding free purine bases and pentose-1-phosphate. In Haemophilus ducreyi (strain 35000HP / ATCC 700724), this protein is Purine nucleoside phosphorylase DeoD-type.